Here is a 465-residue protein sequence, read N- to C-terminus: 5'-adenylylsulfate reductase 1, chloroplastic (465 aa).

The transit peptide at 1–53 directs the protein to the chloroplast; sequence MAMSVNVSSSSSSGIINSRFGVSLEPKVSQIGSLRLLDRVHVAPVSLNLSGKR. A reductase domain region spans residues 73–327; that stretch reads LAATMVAEIA…KAKECGLHKG (255 aa). In terms of domain architecture, Thioredoxin spans 344 to 465; the sequence is SAVADIFKSE…SLTSFLNLVR (122 aa). Residues Cys385 and Cys388 each act as nucleophile in the active site. Residues Cys385 and Cys388 are joined by a disulfide bond.

Belongs to the APS reductase family. Requires [4Fe-4S] cluster as cofactor. Leaves, roots and stem.

It is found in the plastid. It localises to the chloroplast. It carries out the reaction glutathione disulfide + sulfite + AMP + 2 H(+) = adenosine 5'-phosphosulfate + 2 glutathione. Stimulated by sodium sulfate &gt; ammonium sulfate and is sensitive to inactivation by 5'AMP. Functionally, reduces sulfate for Cys biosynthesis. Substrate preference is adenosine-5'-phosphosulfate (APS) &gt;&gt; 3'-phosphoadenosine-5'-phosphosulfate (PAPS). Uses glutathione or DTT as source of protons. This Arabidopsis thaliana (Mouse-ear cress) protein is 5'-adenylylsulfate reductase 1, chloroplastic (APR1).